A 389-amino-acid chain; its full sequence is Tryptophan synthase beta chain 1 (389 aa).

Position 84 is an N6-(pyridoxal phosphate)lysine (Lys84).

Belongs to the TrpB family. In terms of assembly, tetramer of two alpha and two beta chains. Pyridoxal 5'-phosphate serves as cofactor.

Its subcellular location is the plastid. The protein resides in the chloroplast. It carries out the reaction (1S,2R)-1-C-(indol-3-yl)glycerol 3-phosphate + L-serine = D-glyceraldehyde 3-phosphate + L-tryptophan + H2O. The protein operates within amino-acid biosynthesis; L-tryptophan biosynthesis; L-tryptophan from chorismate: step 5/5. In terms of biological role, the beta subunit is responsible for the synthesis of L-tryptophan from indole and L-serine. This is Tryptophan synthase beta chain 1 (TSB1) from Zea mays (Maize).